The primary structure comprises 289 residues: Formamidopyrimidine-DNA glycosylase (289 aa).

Pro-2 acts as the Schiff-base intermediate with DNA in catalysis. Catalysis depends on Glu-3, which acts as the Proton donor. Lys-60 acts as the Proton donor; for beta-elimination activity in catalysis. Residues His-94, Arg-126, and Arg-167 each coordinate DNA. The FPG-type zinc finger occupies 252-287; sequence QVYGKPAGTPCPRCGTGLARIRIAGRSSVFCPRCQP. Catalysis depends on Arg-277, which acts as the Proton donor; for delta-elimination activity.

Belongs to the FPG family. As to quaternary structure, monomer. The cofactor is Zn(2+).

The enzyme catalyses Hydrolysis of DNA containing ring-opened 7-methylguanine residues, releasing 2,6-diamino-4-hydroxy-5-(N-methyl)formamidopyrimidine.. The catalysed reaction is 2'-deoxyribonucleotide-(2'-deoxyribose 5'-phosphate)-2'-deoxyribonucleotide-DNA = a 3'-end 2'-deoxyribonucleotide-(2,3-dehydro-2,3-deoxyribose 5'-phosphate)-DNA + a 5'-end 5'-phospho-2'-deoxyribonucleoside-DNA + H(+). Its function is as follows. Involved in base excision repair of DNA damaged by oxidation or by mutagenic agents. Acts as a DNA glycosylase that recognizes and removes damaged bases. Has a preference for oxidized purines, such as 7,8-dihydro-8-oxoguanine (8-oxoG). Has AP (apurinic/apyrimidinic) lyase activity and introduces nicks in the DNA strand. Cleaves the DNA backbone by beta-delta elimination to generate a single-strand break at the site of the removed base with both 3'- and 5'-phosphates. The polypeptide is Formamidopyrimidine-DNA glycosylase (Thermomicrobium roseum (strain ATCC 27502 / DSM 5159 / P-2)).